Here is a 425-residue protein sequence, read N- to C-terminus: Glutamate-1-semialdehyde 2,1-aminomutase (425 aa).

An N6-(pyridoxal phosphate)lysine modification is found at K264.

It belongs to the class-III pyridoxal-phosphate-dependent aminotransferase family. HemL subfamily. In terms of assembly, homodimer. It depends on pyridoxal 5'-phosphate as a cofactor.

The protein localises to the cytoplasm. It carries out the reaction (S)-4-amino-5-oxopentanoate = 5-aminolevulinate. It functions in the pathway porphyrin-containing compound metabolism; protoporphyrin-IX biosynthesis; 5-aminolevulinate from L-glutamyl-tRNA(Glu): step 2/2. This chain is Glutamate-1-semialdehyde 2,1-aminomutase, found in Leptospira biflexa serovar Patoc (strain Patoc 1 / Ames).